A 72-amino-acid chain; its full sequence is Translation initiation factor IF-1 1 (72 aa).

The S1-like domain occupies 1–72 (MSKDDVIQMA…TRARIIFRAK (72 aa)).

The protein belongs to the IF-1 family. In terms of assembly, component of the 30S ribosomal translation pre-initiation complex which assembles on the 30S ribosome in the order IF-2 and IF-3, IF-1 and N-formylmethionyl-tRNA(fMet); mRNA recruitment can occur at any time during PIC assembly.

It localises to the cytoplasm. Functionally, one of the essential components for the initiation of protein synthesis. Stabilizes the binding of IF-2 and IF-3 on the 30S subunit to which N-formylmethionyl-tRNA(fMet) subsequently binds. Helps modulate mRNA selection, yielding the 30S pre-initiation complex (PIC). Upon addition of the 50S ribosomal subunit IF-1, IF-2 and IF-3 are released leaving the mature 70S translation initiation complex. This Polynucleobacter asymbioticus (strain DSM 18221 / CIP 109841 / QLW-P1DMWA-1) (Polynucleobacter necessarius subsp. asymbioticus) protein is Translation initiation factor IF-1 1.